The chain runs to 394 residues: Flagellin B (394 aa).

Belongs to the bacterial flagellin family.

The protein resides in the secreted. It localises to the bacterial flagellum. Flagellin is the subunit protein which polymerizes to form the filaments of bacterial flagella. The polypeptide is Flagellin B (flaB) (Rhizobium meliloti (strain 1021) (Ensifer meliloti)).